The chain runs to 179 residues: Inner membrane-spanning protein YciB (179 aa).

A run of 5 helical transmembrane segments spans residues 22-42 (IYAA…YSWV), 50-70 (MALI…FFHN), 76-96 (WKVT…QWVM), 121-141 (LAWA…AFWL), and 149-169 (FKVF…GIYI).

This sequence belongs to the YciB family.

It localises to the cell inner membrane. Its function is as follows. Plays a role in cell envelope biogenesis, maintenance of cell envelope integrity and membrane homeostasis. The chain is Inner membrane-spanning protein YciB from Shigella boydii serotype 18 (strain CDC 3083-94 / BS512).